The primary structure comprises 495 residues: Polybrominated aromatic compounds synthase (495 aa).

Residue Cys437 participates in heme binding.

It belongs to the cytochrome P450 family. Heme is required as a cofactor.

In terms of biological role, cytochrome P450 protein involved in the biosynthesis of polybrominated aromatic organic compounds. In the presence of ferredoxin, ferredoxin reductase and NADH, catalyzes the coupling of bromophenols and bromopyrroles, forming various polybrominated biphenyls and hydroxylated polybrominated diphenyl ethers (OH-BDE). Can also mediate the heterocoupling of 3,5-dibromocatechol, forming six different compounds, including polybrominated dibenzo-p-dioxins, which are among the most toxic molecules known to man. This is Polybrominated aromatic compounds synthase from Marinomonas mediterranea (strain ATCC 700492 / JCM 21426 / NBRC 103028 / MMB-1).